The primary structure comprises 455 residues: MSLDIVILAAGQGTRMRSALPKVLHPVAGNSMLGHVIHSARQLSPNGIHVVIGHGADAVREQLAADDLNFVMQDKQLGTGHAVAQALPALTAETVLILYGDVPLIEVETLTRLLKLVNPQQLGLLTVTLDDPTGYGRIVRDQQNRVCAIVEHKDANDVQKAITEGNTGILAVPAKRLADWLGRLSNNNAQGEYYLTDVIAMAVNDGLIVATEQPYGAMEVQGANDRKQLSELERHYQLREARRLMAGGVTLRDPARFDVRGEVSVGRDVLIDINVILEGKVVIEDNVVIGPNCVIKDSTLRKGVIVKANSHIEGAILGEGSDAGPFARLRPGSVLGAKAHVGNFVELKNANLGEGAKVGHLTYLGDAEVGARTNIGAGTITCNYDGANKHKTTLGTDVFIGSNNSLVAPVDIFDGATTAAGSTITQNVPTEQLGVARARQRNIEGWKRPVKIRKD.

Residues 1–226 form a pyrophosphorylase region; sequence MSLDIVILAA…AMEVQGANDR (226 aa). UDP-N-acetyl-alpha-D-glucosamine contacts are provided by residues 8–11, Lys-22, Gln-73, 78–79, 99–101, Gly-136, Glu-151, Asn-166, and Asn-224; these read LAAG, GT, and YGD. Residue Asp-101 coordinates Mg(2+). Asn-224 is a Mg(2+) binding site. Positions 227 to 247 are linker; sequence KQLSELERHYQLREARRLMAG. The tract at residues 248 to 455 is N-acetyltransferase; that stretch reads GVTLRDPARF…WKRPVKIRKD (208 aa). UDP-N-acetyl-alpha-D-glucosamine is bound by residues Arg-330 and Lys-348. His-360 serves as the catalytic Proton acceptor. UDP-N-acetyl-alpha-D-glucosamine is bound by residues Tyr-363 and Asn-374. Acetyl-CoA-binding positions include Ala-377, 383 to 384, Ser-402, Ala-420, and Arg-437; that span reads NY.

The protein in the N-terminal section; belongs to the N-acetylglucosamine-1-phosphate uridyltransferase family. In the C-terminal section; belongs to the transferase hexapeptide repeat family. Homotrimer. It depends on Mg(2+) as a cofactor.

It localises to the cytoplasm. It catalyses the reaction alpha-D-glucosamine 1-phosphate + acetyl-CoA = N-acetyl-alpha-D-glucosamine 1-phosphate + CoA + H(+). The enzyme catalyses N-acetyl-alpha-D-glucosamine 1-phosphate + UTP + H(+) = UDP-N-acetyl-alpha-D-glucosamine + diphosphate. It functions in the pathway nucleotide-sugar biosynthesis; UDP-N-acetyl-alpha-D-glucosamine biosynthesis; N-acetyl-alpha-D-glucosamine 1-phosphate from alpha-D-glucosamine 6-phosphate (route II): step 2/2. It participates in nucleotide-sugar biosynthesis; UDP-N-acetyl-alpha-D-glucosamine biosynthesis; UDP-N-acetyl-alpha-D-glucosamine from N-acetyl-alpha-D-glucosamine 1-phosphate: step 1/1. The protein operates within bacterial outer membrane biogenesis; LPS lipid A biosynthesis. Its function is as follows. Catalyzes the last two sequential reactions in the de novo biosynthetic pathway for UDP-N-acetylglucosamine (UDP-GlcNAc). The C-terminal domain catalyzes the transfer of acetyl group from acetyl coenzyme A to glucosamine-1-phosphate (GlcN-1-P) to produce N-acetylglucosamine-1-phosphate (GlcNAc-1-P), which is converted into UDP-GlcNAc by the transfer of uridine 5-monophosphate (from uridine 5-triphosphate), a reaction catalyzed by the N-terminal domain. This chain is Bifunctional protein GlmU, found in Pseudomonas savastanoi pv. phaseolicola (strain 1448A / Race 6) (Pseudomonas syringae pv. phaseolicola (strain 1448A / Race 6)).